We begin with the raw amino-acid sequence, 126 residues long: Protein ApaG (126 aa).

In terms of domain architecture, ApaG spans 2 to 126; that stretch reads SDPRYQIDVS…FRLAVPGALH (125 aa).

This is Protein ApaG from Pseudomonas putida (strain W619).